The chain runs to 350 residues: Twinfilin-1 (350 aa).

Residue Ser2 is modified to N-acetylserine. The ADF-H 1 domain occupies 2-139 (SHRTGIQASE…SLHGYKKYLL (138 aa)). 2 positions are modified to phosphoserine: Ser143 and Ser277. One can recognise an ADF-H 2 domain in the interval 175-313 (LQGVAFPISR…TADFLYEEVH (139 aa)). Tyr309 is modified (phosphotyrosine). Positions 316 to 350 (QHAHKQSFAKPKGPAGKRGIRRLIRGPAETEATTD) are disordered. Thr349 is modified (phosphothreonine).

Belongs to the actin-binding proteins ADF family. Twinfilin subfamily. In terms of assembly, interacts with G-actin; ADP-actin form and capping protein (CP). May also be able to interact with TWF2 and phosphoinositides, PI(4,5)P2. When bound to PI(4,5)P2, it is down-regulated. Interacts with ACTG1. Phosphorylated on serine and threonine residues.

It is found in the cytoplasm. The protein resides in the cytoskeleton. In terms of biological role, actin-binding protein involved in motile and morphological processes. Inhibits actin polymerization, likely by sequestering G-actin. By capping the barbed ends of filaments, it also regulates motility. Seems to play an important role in clathrin-mediated endocytosis and distribution of endocytic organelles. The chain is Twinfilin-1 (TWF1) from Pongo abelii (Sumatran orangutan).